The chain runs to 358 residues: tRNA (guanine(26)-N(2))-dimethyltransferase (358 aa).

Residues 5 to 354 enclose the Trm1 methyltransferase domain; it reads VIRREGKAVF…ATYGEVERVL (350 aa). S-adenosyl-L-methionine contacts are provided by Arg39, Arg69, Asp87, Asp113, and Ala114.

Belongs to the class I-like SAM-binding methyltransferase superfamily. Trm1 family.

The catalysed reaction is guanosine(26) in tRNA + 2 S-adenosyl-L-methionine = N(2)-dimethylguanosine(26) in tRNA + 2 S-adenosyl-L-homocysteine + 2 H(+). In terms of biological role, dimethylates a single guanine residue at position 26 of a number of tRNAs using S-adenosyl-L-methionine as donor of the methyl groups. The sequence is that of tRNA (guanine(26)-N(2))-dimethyltransferase from Pyrobaculum calidifontis (strain DSM 21063 / JCM 11548 / VA1).